The sequence spans 307 residues: tRNA pseudouridine synthase B (307 aa).

The Nucleophile role is filled by Asp41.

This sequence belongs to the pseudouridine synthase TruB family. Type 1 subfamily.

The catalysed reaction is uridine(55) in tRNA = pseudouridine(55) in tRNA. Responsible for synthesis of pseudouridine from uracil-55 in the psi GC loop of transfer RNAs. In Prochlorococcus marinus (strain AS9601), this protein is tRNA pseudouridine synthase B.